We begin with the raw amino-acid sequence, 98 residues long: DNA-directed RNA polymerase subunit omega (98 aa).

It belongs to the RNA polymerase subunit omega family. As to quaternary structure, the RNAP catalytic core consists of 2 alpha, 1 beta, 1 beta' and 1 omega subunit. When a sigma factor is associated with the core the holoenzyme is formed, which can initiate transcription.

It carries out the reaction RNA(n) + a ribonucleoside 5'-triphosphate = RNA(n+1) + diphosphate. Promotes RNA polymerase assembly. Latches the N- and C-terminal regions of the beta' subunit thereby facilitating its interaction with the beta and alpha subunits. The sequence is that of DNA-directed RNA polymerase subunit omega from Tropheryma whipplei (strain Twist) (Whipple's bacillus).